A 451-amino-acid chain; its full sequence is Chromosomal replication initiator protein DnaA (451 aa).

The tract at residues 1 to 93 is domain I, interacts with DnaA modulators; it reads MENIDDLWNK…HNQEEEALPE (93 aa). Residues 88-108 are disordered; the sequence is EEALPEQTPQTPPEKDVAGQS. The segment at 94–113 is domain II; that stretch reads QTPQTPPEKDVAGQSTLSQT. The interval 114–330 is domain III, AAA+ region; the sequence is MLNDKYTFNT…GALIRVVAYS (217 aa). Residues G158, G160, K161, and T162 each contribute to the ATP site. Residues 331–451 form a domain IV, binds dsDNA region; it reads SLINQDMNAD…VQAITEQLRQ (121 aa).

The protein belongs to the DnaA family. Oligomerizes as a right-handed, spiral filament on DNA at oriC.

Its subcellular location is the cytoplasm. Plays an essential role in the initiation and regulation of chromosomal replication. ATP-DnaA binds to the origin of replication (oriC) to initiate formation of the DNA replication initiation complex once per cell cycle. Binds the DnaA box (a 9 base pair repeat at the origin) and separates the double-stranded (ds)DNA. Forms a right-handed helical filament on oriC DNA; dsDNA binds to the exterior of the filament while single-stranded (ss)DNA is stabiized in the filament's interior. The ATP-DnaA-oriC complex binds and stabilizes one strand of the AT-rich DNA unwinding element (DUE), permitting loading of DNA polymerase. After initiation quickly degrades to an ADP-DnaA complex that is not apt for DNA replication. Binds acidic phospholipids. The chain is Chromosomal replication initiator protein DnaA from Shouchella clausii (strain KSM-K16) (Alkalihalobacillus clausii).